We begin with the raw amino-acid sequence, 299 residues long: Sulfate adenylyltransferase subunit 2 (299 aa).

Residues 276–299 (EREGRVIDHDSAGSMEKKKREGYF) form a disordered region.

Belongs to the PAPS reductase family. CysD subfamily. As to quaternary structure, heterodimer composed of CysD, the smaller subunit, and CysN.

It catalyses the reaction sulfate + ATP + H(+) = adenosine 5'-phosphosulfate + diphosphate. Its pathway is sulfur metabolism; hydrogen sulfide biosynthesis; sulfite from sulfate: step 1/3. With CysN forms the ATP sulfurylase (ATPS) that catalyzes the adenylation of sulfate producing adenosine 5'-phosphosulfate (APS) and diphosphate, the first enzymatic step in sulfur assimilation pathway. APS synthesis involves the formation of a high-energy phosphoric-sulfuric acid anhydride bond driven by GTP hydrolysis by CysN coupled to ATP hydrolysis by CysD. The polypeptide is Sulfate adenylyltransferase subunit 2 (Pseudoalteromonas translucida (strain TAC 125)).